The sequence spans 200 residues: dTTP/UTP pyrophosphatase (200 aa).

Catalysis depends on aspartate 80, which acts as the Proton acceptor.

It belongs to the Maf family. YhdE subfamily. It depends on a divalent metal cation as a cofactor.

Its subcellular location is the cytoplasm. It catalyses the reaction dTTP + H2O = dTMP + diphosphate + H(+). The catalysed reaction is UTP + H2O = UMP + diphosphate + H(+). Its function is as follows. Nucleoside triphosphate pyrophosphatase that hydrolyzes dTTP and UTP. May have a dual role in cell division arrest and in preventing the incorporation of modified nucleotides into cellular nucleic acids. The protein is dTTP/UTP pyrophosphatase of Pasteurella multocida (strain Pm70).